The chain runs to 478 residues: Glycogen synthase (478 aa).

Lys15 contacts ADP-alpha-D-glucose.

This sequence belongs to the glycosyltransferase 1 family. Bacterial/plant glycogen synthase subfamily.

It catalyses the reaction [(1-&gt;4)-alpha-D-glucosyl](n) + ADP-alpha-D-glucose = [(1-&gt;4)-alpha-D-glucosyl](n+1) + ADP + H(+). It participates in glycan biosynthesis; glycogen biosynthesis. Its function is as follows. Synthesizes alpha-1,4-glucan chains using ADP-glucose. This is Glycogen synthase from Streptococcus uberis (strain ATCC BAA-854 / 0140J).